The primary structure comprises 201 residues: Pyrrolidone-carboxylate peptidase (201 aa).

Active-site residues include Glu78, Cys141, and His165.

This sequence belongs to the peptidase C15 family. As to quaternary structure, homotetramer.

It localises to the cytoplasm. It carries out the reaction Release of an N-terminal pyroglutamyl group from a polypeptide, the second amino acid generally not being Pro.. Its function is as follows. Removes 5-oxoproline from various penultimate amino acid residues except L-proline. The sequence is that of Pyrrolidone-carboxylate peptidase from Brachyspira hyodysenteriae (strain ATCC 49526 / WA1).